A 652-amino-acid polypeptide reads, in one-letter code: Acetyl-coenzyme A synthetase (652 aa).

CoA-binding positions include 191-194 (RAGR), T311, and N335. ATP-binding positions include 387–389 (GEP), 411–416 (DTWWQT), D500, and R515. S523 contributes to the CoA binding site. ATP is bound at residue R526. Positions 537, 539, and 542 each coordinate Mg(2+). R584 is a binding site for CoA. Position 609 is an N6-acetyllysine (K609).

The protein belongs to the ATP-dependent AMP-binding enzyme family. Mg(2+) serves as cofactor. Post-translationally, acetylated. Deacetylation by the SIR2-homolog deacetylase activates the enzyme.

The enzyme catalyses acetate + ATP + CoA = acetyl-CoA + AMP + diphosphate. Its function is as follows. Catalyzes the conversion of acetate into acetyl-CoA (AcCoA), an essential intermediate at the junction of anabolic and catabolic pathways. Acs undergoes a two-step reaction. In the first half reaction, Acs combines acetate with ATP to form acetyl-adenylate (AcAMP) intermediate. In the second half reaction, it can then transfer the acetyl group from AcAMP to the sulfhydryl group of CoA, forming the product AcCoA. Enables the cell to use acetate during aerobic growth to generate energy via the TCA cycle, and biosynthetic compounds via the glyoxylate shunt. Acetylates CheY, the response regulator involved in flagellar movement and chemotaxis. This is Acetyl-coenzyme A synthetase from Cronobacter sakazakii (strain ATCC BAA-894) (Enterobacter sakazakii).